The chain runs to 162 residues: Large ribosomal subunit protein uL30 (162 aa).

The protein belongs to the universal ribosomal protein uL30 family. In terms of assembly, part of the 50S ribosomal subunit.

The chain is Large ribosomal subunit protein uL30 from Korarchaeum cryptofilum (strain OPF8).